Consider the following 395-residue polypeptide: Chalcone synthase (395 aa).

Cys164 is an active-site residue.

The protein belongs to the thiolase-like superfamily. Chalcone/stilbene synthases family.

The catalysed reaction is (E)-4-coumaroyl-CoA + 3 malonyl-CoA + 3 H(+) = 2',4,4',6'-tetrahydroxychalcone + 3 CO2 + 4 CoA. Its pathway is secondary metabolite biosynthesis; flavonoid biosynthesis. The primary product of this enzyme is 4,2',4',6'-tetrahydroxychalcone (also termed naringenin-chalcone or chalcone) which can under specific conditions spontaneously isomerize into naringenin. The polypeptide is Chalcone synthase (CHS) (Betula pendula (European white birch)).